Consider the following 118-residue polypeptide: Large ribosomal subunit protein bL19 (118 aa).

Belongs to the bacterial ribosomal protein bL19 family.

Its function is as follows. This protein is located at the 30S-50S ribosomal subunit interface and may play a role in the structure and function of the aminoacyl-tRNA binding site. This Helicobacter acinonychis (strain Sheeba) protein is Large ribosomal subunit protein bL19.